Consider the following 86-residue polypeptide: Selenoprotein W (86 aa).

A cross-link (cysteinyl-selenocysteine (Cys-Sec); redox-active) is located at residues 10–13 (CGGU). Position 13 (U13) is a non-standard amino acid, selenocysteine.

This sequence belongs to the SelWTH family. Selenoprotein W subfamily.

Its subcellular location is the cytoplasm. Plays a role as a glutathione (GSH)-dependent antioxidant. May be involved in a redox-related process. May play a role in the myopathies of selenium deficiency. In Danio rerio (Zebrafish), this protein is Selenoprotein W.